Reading from the N-terminus, the 478-residue chain is Cysteine--tRNA ligase (478 aa).

C29 is a Zn(2+) binding site. The 'HIGH' region signature appears at 31-41 (ATVQSIPHIGH). Residues C207, H232, and E236 each contribute to the Zn(2+) site. The 'KMSKS' region signature appears at 263–267 (KMSKS). An ATP-binding site is contributed by K266.

The protein belongs to the class-I aminoacyl-tRNA synthetase family. In terms of assembly, monomer. It depends on Zn(2+) as a cofactor.

The protein localises to the cytoplasm. The catalysed reaction is tRNA(Cys) + L-cysteine + ATP = L-cysteinyl-tRNA(Cys) + AMP + diphosphate. The polypeptide is Cysteine--tRNA ligase (Corynebacterium jeikeium (strain K411)).